The chain runs to 288 residues: Small ribosomal subunit protein uS2 (288 aa).

The interval 267-288 (EEVEEVEEEFIPSEIEDEDEKF) is disordered.

This sequence belongs to the universal ribosomal protein uS2 family.

The protein is Small ribosomal subunit protein uS2 of Petrotoga mobilis (strain DSM 10674 / SJ95).